The following is a 179-amino-acid chain: Large ribosomal subunit protein uL5 (179 aa).

The protein belongs to the universal ribosomal protein uL5 family. As to quaternary structure, part of the 50S ribosomal subunit; part of the 5S rRNA/L5/L18/L25 subcomplex. Contacts the 5S rRNA and the P site tRNA. Forms a bridge to the 30S subunit in the 70S ribosome.

In terms of biological role, this is one of the proteins that bind and probably mediate the attachment of the 5S RNA into the large ribosomal subunit, where it forms part of the central protuberance. In the 70S ribosome it contacts protein S13 of the 30S subunit (bridge B1b), connecting the 2 subunits; this bridge is implicated in subunit movement. Contacts the P site tRNA; the 5S rRNA and some of its associated proteins might help stabilize positioning of ribosome-bound tRNAs. The chain is Large ribosomal subunit protein uL5 from Variovorax paradoxus (strain S110).